The primary structure comprises 414 residues: Tetraspanning orphan receptor (414 aa).

Residues 1 to 28 (MPRASALLTSDPRHQFTCCLCLHVRTGT) lie on the Cytoplasmic side of the membrane. Residues 29–49 (IIFGITQIIIQLIFISFLFLM) form a helical membrane-spanning segment. The Extracellular segment spans residues 50 to 166 (TFNPRLFPED…EIKIRQFSPY (117 aa)). A helical transmembrane segment spans residues 167-187 (IAVCVTTFSLAFCCFMVHGAI). Residues 188 to 194 (TRQPTHL) lie on the Cytoplasmic side of the membrane. Residues 195–215 (LPFFFIQVFDLIICLIHILGF) form a helical membrane-spanning segment. The Extracellular segment spans residues 216–241 (MSSTSDIRLMIHTKTGPIYIKSTGLA). The helical transmembrane segment at 242 to 262 (FIILSISCMMLAFKAYCLGMV) threads the bilayer. Residues 263 to 414 (WDCYKYLMLN…TSTPSNVHPC (152 aa)) are Cytoplasmic-facing. Residues 306–328 (LTGNLDSANESNTRAHPDPVTYD) form a disordered region.

Interacts (via N-terminal extracellular domain) with human C2a. Post-translationally, phosphorylated on tyrosine residues.

The protein resides in the cell membrane. In terms of biological role, cell surface receptor that binds to human complement C2a protein. This results in inhibition of the classical and lectin pathways of complement activation, probably due to interference with binding of C2a to C4b and interference with cleavage by C1 or MASP2 such that C3 convertase cannot be formed. This infers resistance to complement-mediated cell lysis, allowing parasite survival and infection. The sequence is that of Tetraspanning orphan receptor from Schistosoma japonicum (Blood fluke).